Here is a 339-residue protein sequence, read N- to C-terminus: MIRVAINGYGRIGRSILRALYESGKRQQIQIVAINELAKPEAICHLTQYDTTHGRFKHTVKLNGDQLLIGDDSILLLNQPDANLLPWAELDIDIVYEATGSLIDRQACEAHIHAGAKQVLISHPSSADVDETIVYGVNHDLLRAEHTVISNASCTTNCIVPVIDVLDKHFEVKSGAITTIHSAMNDQQVIDAYHDDLRRTRAAGQSIIPVDTKLARGIERILPHMKDKFEAISVRVPTINVTAIDLSVTLEKKVNIEQINSVLQRASNGSFNGILGYTDEPLVSCDFNHDPRSSIVDGTQTRVSAGHLVKLLLWCDNEWGFANRMLDTSLAMIQAKLDR.

11–12 (RI) lines the NAD(+) pocket. Residues 153 to 155 (SCT), Arg-199, 212 to 213 (TK), and Arg-235 contribute to the substrate site. Catalysis depends on Cys-154, which acts as the Nucleophile. Asn-317 contributes to the NAD(+) binding site.

Belongs to the glyceraldehyde-3-phosphate dehydrogenase family. Epd subfamily. As to quaternary structure, homotetramer.

The protein localises to the cytoplasm. It carries out the reaction D-erythrose 4-phosphate + NAD(+) + H2O = 4-phospho-D-erythronate + NADH + 2 H(+). The protein operates within cofactor biosynthesis; pyridoxine 5'-phosphate biosynthesis; pyridoxine 5'-phosphate from D-erythrose 4-phosphate: step 1/5. Catalyzes the NAD-dependent conversion of D-erythrose 4-phosphate to 4-phosphoerythronate. The polypeptide is D-erythrose-4-phosphate dehydrogenase (Shewanella frigidimarina (strain NCIMB 400)).